The following is a 368-amino-acid chain: 3-dehydroquinate synthase (368 aa).

Residues 99–103 (GVVGD), 123–124 (TT), lysine 136, and lysine 145 each bind NAD(+). Residues glutamate 178, histidine 242, and histidine 259 each contribute to the Zn(2+) site.

The protein belongs to the sugar phosphate cyclases superfamily. Dehydroquinate synthase family. NAD(+) serves as cofactor. The cofactor is Co(2+). It depends on Zn(2+) as a cofactor.

It is found in the cytoplasm. The enzyme catalyses 7-phospho-2-dehydro-3-deoxy-D-arabino-heptonate = 3-dehydroquinate + phosphate. It functions in the pathway metabolic intermediate biosynthesis; chorismate biosynthesis; chorismate from D-erythrose 4-phosphate and phosphoenolpyruvate: step 2/7. Functionally, catalyzes the conversion of 3-deoxy-D-arabino-heptulosonate 7-phosphate (DAHP) to dehydroquinate (DHQ). The sequence is that of 3-dehydroquinate synthase from Chlorobaculum tepidum (strain ATCC 49652 / DSM 12025 / NBRC 103806 / TLS) (Chlorobium tepidum).